Here is a 739-residue protein sequence, read N- to C-terminus: Disintegrin and metalloproteinase domain-containing protein 18 (739 aa).

Residues 1–16 (MFLLLALLTELGRLQA) form the signal peptide. Positions 17–184 (HEGSEGIFLH…IKNLSKLLPQ (168 aa)) are excised as a propeptide. N-linked (GlcNAc...) asparagine glycans are attached at residues asparagine 36, asparagine 76, asparagine 122, asparagine 149, asparagine 156, asparagine 177, and asparagine 294. The Extracellular portion of the chain corresponds to 177 to 687 (NLSKLLPQYL…EKGYNTHWNN (511 aa)). Residues 184-381 (QYLEIYIIVE…FETKCLQKLS (198 aa)) enclose the Peptidase M12B domain. Cystine bridges form between cysteine 293–cysteine 376, cysteine 335–cysteine 360, cysteine 337–cysteine 342, and cysteine 450–cysteine 471. Asparagine 359, asparagine 465, asparagine 561, asparagine 611, and asparagine 625 each carry an N-linked (GlcNAc...) asparagine glycan. The 90-residue stretch at 390 to 479 (QPVCGNGILE…NCVPDTYALN (90 aa)) folds into the Disintegrin domain. Positions 620-654 (MGYNCNATTKCKGKGICNNFGNCQCFPGHRPPDCK) constitute an EGF-like domain. Cystine bridges form between cysteine 624/cysteine 636, cysteine 630/cysteine 642, and cysteine 644/cysteine 653. A helical membrane pass occupies residues 688–708 (WFILSFCIFLPFFIVFTTVIF). The Cytoplasmic segment spans residues 709-739 (KRNEISKSCNRENAEYNRNSSVVSESDDVGH).

In terms of processing, the prodomain and the metalloprotease-like domain are cleaved during the epididymal maturation of the spermatozoa. In terms of tissue distribution, expressed specifically in testis.

The protein resides in the membrane. Functionally, sperm surface membrane protein that may be involved in spermatogenesis and fertilization. This is a non catalytic metalloprotease-like protein. This Homo sapiens (Human) protein is Disintegrin and metalloproteinase domain-containing protein 18 (ADAM18).